Here is a 61-residue protein sequence, read N- to C-terminus: Toxin S5C1 (61 aa).

Disulfide bonds link Cys3–Cys22, Cys16–Cys39, Cys41–Cys53, and Cys54–Cys59. Positions 45-47 (RGD) match the Cell attachment site motif.

Belongs to the three-finger toxin family. Short-chain subfamily. Antiplatelet toxin sub-subfamily. As to expression, expressed by the venom gland.

The protein localises to the secreted. In terms of biological role, inhibits ADP-induced platelet aggregation and inhibits the binding of purified platelet fibrinogen receptor alpha-IIb/beta-3 (ITGA2B/ITGB3) to immobilized fibrinogen. This is Toxin S5C1 from Dendroaspis jamesoni kaimosae (Eastern Jameson's mamba).